We begin with the raw amino-acid sequence, 292 residues long: Elongation factor Ts (292 aa).

Positions 79 to 82 (TDFV) are involved in Mg(2+) ion dislocation from EF-Tu.

Belongs to the EF-Ts family.

The protein localises to the cytoplasm. Its function is as follows. Associates with the EF-Tu.GDP complex and induces the exchange of GDP to GTP. It remains bound to the aminoacyl-tRNA.EF-Tu.GTP complex up to the GTP hydrolysis stage on the ribosome. In Xanthomonas axonopodis pv. citri (strain 306), this protein is Elongation factor Ts.